Consider the following 452-residue polypeptide: tRNA modification GTPase MnmE (452 aa).

(6S)-5-formyl-5,6,7,8-tetrahydrofolate is bound by residues Arg21, Glu78, and Lys118. The TrmE-type G domain occupies Gly214–Gly375. Asn224 is a binding site for K(+). GTP is bound by residues Asn224–Ser229, Thr243–Thr249, Asp268–Gly271, and Asn333–Asp336. A Mg(2+)-binding site is contributed by Ser228. Positions 243, 245, and 248 each coordinate K(+). Thr249 provides a ligand contact to Mg(2+). (6S)-5-formyl-5,6,7,8-tetrahydrofolate is bound at residue Lys452.

This sequence belongs to the TRAFAC class TrmE-Era-EngA-EngB-Septin-like GTPase superfamily. TrmE GTPase family. As to quaternary structure, homodimer. Heterotetramer of two MnmE and two MnmG subunits. Requires K(+) as cofactor.

Its subcellular location is the cytoplasm. In terms of biological role, exhibits a very high intrinsic GTPase hydrolysis rate. Involved in the addition of a carboxymethylaminomethyl (cmnm) group at the wobble position (U34) of certain tRNAs, forming tRNA-cmnm(5)s(2)U34. The protein is tRNA modification GTPase MnmE of Pasteurella multocida (strain Pm70).